Reading from the N-terminus, the 453-residue chain is tRNA modification GTPase MnmE (453 aa).

The (6S)-5-formyl-5,6,7,8-tetrahydrofolate site is built by arginine 22, glutamate 79, and lysine 119. The TrmE-type G domain maps to 215–376 (GMKVVIAGRP…LKQHLKSLMG (162 aa)). Asparagine 225 contributes to the K(+) binding site. GTP-binding positions include 225-230 (NAGKSS), 244-250 (TEIAGTT), 269-272 (DTAG), and 334-337 (NKAD). Residue serine 229 participates in Mg(2+) binding. Residues threonine 244, isoleucine 246, and threonine 249 each contribute to the K(+) site. Residue threonine 250 coordinates Mg(2+). A (6S)-5-formyl-5,6,7,8-tetrahydrofolate-binding site is contributed by lysine 453.

This sequence belongs to the TRAFAC class TrmE-Era-EngA-EngB-Septin-like GTPase superfamily. TrmE GTPase family. In terms of assembly, homodimer. Heterotetramer of two MnmE and two MnmG subunits. It depends on K(+) as a cofactor.

It is found in the cytoplasm. In terms of biological role, exhibits a very high intrinsic GTPase hydrolysis rate. Involved in the addition of a carboxymethylaminomethyl (cmnm) group at the wobble position (U34) of certain tRNAs, forming tRNA-cmnm(5)s(2)U34. This is tRNA modification GTPase MnmE from Shewanella baltica (strain OS195).